Reading from the N-terminus, the 39-residue chain is GAFIMPGTLWCGAGNAASDYSQLGTEKDTDMCCRDHDHC.

His-36 is an active-site residue.

Belongs to the phospholipase A2 family. Group III subfamily. Ca(2+) serves as cofactor. In terms of tissue distribution, expressed by the venom gland.

It localises to the secreted. The catalysed reaction is a 1,2-diacyl-sn-glycero-3-phosphocholine + H2O = a 1-acyl-sn-glycero-3-phosphocholine + a fatty acid + H(+). Its function is as follows. PLA2 catalyzes the calcium-dependent hydrolysis of the 2-acyl groups in 3-sn-phosphoglycerides. The polypeptide is Phospholipase A2 (Heloderma horridum horridum (Mexican beaded lizard)).